The following is a 306-amino-acid chain: Mycothiol acetyltransferase (306 aa).

N-acetyltransferase domains follow at residues 5-162 (VWAE…TFVP) and 155-306 (VRLR…AQGS). Residues 82–84 (LIV) and 90–95 (RRGHGT) each bind acetyl-CoA. Residues glutamate 182, lysine 222, and glutamate 238 each contribute to the 1D-myo-inositol 2-(L-cysteinylamino)-2-deoxy-alpha-D-glucopyranoside site. Acetyl-CoA contacts are provided by residues 242–244 (VGV) and 249–255 (QGGGLGK). Residue tyrosine 276 participates in 1D-myo-inositol 2-(L-cysteinylamino)-2-deoxy-alpha-D-glucopyranoside binding.

Belongs to the acetyltransferase family. MshD subfamily. As to quaternary structure, monomer.

It carries out the reaction 1D-myo-inositol 2-(L-cysteinylamino)-2-deoxy-alpha-D-glucopyranoside + acetyl-CoA = mycothiol + CoA + H(+). In terms of biological role, catalyzes the transfer of acetyl from acetyl-CoA to desacetylmycothiol (Cys-GlcN-Ins) to form mycothiol. In Saccharomonospora viridis (strain ATCC 15386 / DSM 43017 / JCM 3036 / CCUG 5913 / NBRC 12207 / NCIMB 9602 / P101) (Thermoactinomyces viridis), this protein is Mycothiol acetyltransferase.